Reading from the N-terminus, the 256-residue chain is Small ribosomal subunit protein eS1 (256 aa).

An N-acetylalanine; partial modification is found at alanine 2.

The protein belongs to the eukaryotic ribosomal protein eS1 family. Component of the small ribosomal subunit. Mature ribosomes consist of a small (40S) and a large (60S) subunit. The 40S subunit contains about 33 different proteins and 1 molecule of RNA (18S). The 60S subunit contains about 49 different proteins and 3 molecules of RNA (25S, 5.8S and 5S).

It is found in the cytoplasm. The chain is Small ribosomal subunit protein eS1 from Candida tropicalis (strain ATCC MYA-3404 / T1) (Yeast).